We begin with the raw amino-acid sequence, 101 residues long: Small ribosomal subunit protein uS14 (101 aa).

It belongs to the universal ribosomal protein uS14 family. Part of the 30S ribosomal subunit. Contacts proteins S3 and S10.

In terms of biological role, binds 16S rRNA, required for the assembly of 30S particles and may also be responsible for determining the conformation of the 16S rRNA at the A site. The polypeptide is Small ribosomal subunit protein uS14 (Caulobacter sp. (strain K31)).